We begin with the raw amino-acid sequence, 316 residues long: N-acetyl-gamma-glutamyl-phosphate reductase (316 aa).

The active site involves Cys-136.

It belongs to the NAGSA dehydrogenase family. Type 1 subfamily.

It is found in the cytoplasm. It carries out the reaction N-acetyl-L-glutamate 5-semialdehyde + phosphate + NADP(+) = N-acetyl-L-glutamyl 5-phosphate + NADPH + H(+). It participates in amino-acid biosynthesis; L-arginine biosynthesis; N(2)-acetyl-L-ornithine from L-glutamate: step 3/4. In terms of biological role, catalyzes the NADPH-dependent reduction of N-acetyl-5-glutamyl phosphate to yield N-acetyl-L-glutamate 5-semialdehyde. The sequence is that of N-acetyl-gamma-glutamyl-phosphate reductase from Xanthomonas campestris pv. campestris (strain ATCC 33913 / DSM 3586 / NCPPB 528 / LMG 568 / P 25).